Consider the following 146-residue polypeptide: Transcription initiation factor TFIID subunit 10b (146 aa).

The disordered stretch occupies residues 16-43 (GASSHGQSSGGGGGGDRDRTTPSSHLSD).

Belongs to the TAF10 family. Belongs to the TFIID complex which is composed of TATA binding protein (Tbp) and a number of TBP-associated factors (TAFs). The N-terminus interacts with the histone fold of Taf8. At embryonic stage 9, expression is seen in the mesodermal layer and midgut primordia. The mesoderm-specific expression persists in later stages of development and at its highest level is detected in midgut, hindgut, and differentiating somatic muscle fibers. Coexpressed with Taf10 in the lateral epidermis and anal plate.

It localises to the cytoplasm. The protein localises to the nucleus. TFIID is a multimeric protein complex that plays a central role in mediating promoter responses to various activators and repressors. The polypeptide is Transcription initiation factor TFIID subunit 10b (Drosophila melanogaster (Fruit fly)).